A 769-amino-acid chain; its full sequence is 5-methyltetrahydropteroyltriglutamate--homocysteine methyltransferase (769 aa).

5-methyltetrahydropteroyltri-L-glutamate-binding positions include 16 to 19 (RELK) and Lys121. Positions 415–450 (SMTERDSPHSSRSPLQREALDLPTLPTTTIGSFPQT) are disordered. The segment covering 439-449 (LPTTTIGSFPQ) has biased composition (polar residues). L-homocysteine-binding positions include 444–446 (IGS) and Glu497. L-methionine-binding positions include 444 to 446 (IGS) and Glu497. Residues 528-529 (RC) and Trp574 each bind 5-methyltetrahydropteroyltri-L-glutamate. Asp612 serves as a coordination point for L-homocysteine. Asp612 is an L-methionine binding site. Residue Glu618 participates in 5-methyltetrahydropteroyltri-L-glutamate binding. Residues His654, Cys656, and Glu678 each contribute to the Zn(2+) site. His707 acts as the Proton donor in catalysis. A Zn(2+)-binding site is contributed by Cys739.

The protein belongs to the vitamin-B12 independent methionine synthase family. Requires Zn(2+) as cofactor.

The enzyme catalyses 5-methyltetrahydropteroyltri-L-glutamate + L-homocysteine = tetrahydropteroyltri-L-glutamate + L-methionine. Its pathway is amino-acid biosynthesis; L-methionine biosynthesis via de novo pathway; L-methionine from L-homocysteine (MetE route): step 1/1. In terms of biological role, catalyzes the transfer of a methyl group from 5-methyltetrahydrofolate to homocysteine resulting in methionine formation. This Salinibacter ruber (strain DSM 13855 / M31) protein is 5-methyltetrahydropteroyltriglutamate--homocysteine methyltransferase.